A 95-amino-acid chain; its full sequence is Integration host factor subunit beta (95 aa).

A disordered region spans residues 56-76 (RAPRTGRNPKTGTSVDLDGKY).

The protein belongs to the bacterial histone-like protein family. In terms of assembly, heterodimer of an alpha and a beta chain.

In terms of biological role, this protein is one of the two subunits of integration host factor, a specific DNA-binding protein that functions in genetic recombination as well as in transcriptional and translational control. This Shewanella sediminis (strain HAW-EB3) protein is Integration host factor subunit beta.